We begin with the raw amino-acid sequence, 676 residues long: Hypermethylated in cancer 1 protein (676 aa).

The tract at residues 1 to 27 (APGARPAASRERGHKSREERCGERGAA) is disordered. The span at 8–23 (ASRERGHKSREERCGE) shows a compositional bias: basic and acidic residues. Positions 63 to 126 (CDVIIVVQNA…IYTGRLGECE (64 aa)) constitute a BTB domain. Residues 241-245 (GLDLS) form a binding to CtBP region. Disordered stretches follow at residues 264–326 (PAEP…LPRG) and 342–405 (GPYL…DRYC). Basic and acidic residues-rich tracts occupy residues 266–278 (EPREPSLPPRHDS) and 351–361 (EKELEREEKAE). Residues 384–398 (STSEETGSSEGPSPG) are compositionally biased toward low complexity. C2H2-type zinc fingers lie at residues 420–447 (YVCIPCGKGFPSSEQLNAHVEAHNEEEL), 474–501 (YRCSSCDKSYKDPATLRQHEKTHWLTRP), 502–529 (YPCTICGKKFTQRGTMTRHMRSHLGLKP), 530–557 (FACDACGMRFTRQYRLTEHMRIHSGEKP), and 558–585 (YECQVCGGKFAQQRNLISHMKMHAAGPD).

It belongs to the krueppel C2H2-type zinc-finger protein family. Hic subfamily. Interacts with CtBP. In terms of tissue distribution, isoform 1 is highly expressed in kidney and lung. Expression of isoform 2 is higher in the lens, retina and stomach, and extremely low in heart, muscle, kidney and lung. Isoform 3 is weakly expressed in heart, kidney and lens.

It is found in the nucleus. Its function is as follows. Binds specifically to the gamma F-1-binding motif of the gamma F-crystallin promoter. May have a regulatory role in sclerotome specification and/or differentiation. Isoform 2 functions as a transcriptional repressor in lens cells. This Gallus gallus (Chicken) protein is Hypermethylated in cancer 1 protein (HIC1).